The primary structure comprises 320 residues: Ferrochelatase (320 aa).

Fe cation is bound by residues His194 and Glu275.

It belongs to the ferrochelatase family. In terms of assembly, monomer.

Its subcellular location is the cytoplasm. The enzyme catalyses heme b + 2 H(+) = protoporphyrin IX + Fe(2+). It participates in porphyrin-containing compound metabolism; protoheme biosynthesis; protoheme from protoporphyrin-IX: step 1/1. In terms of biological role, catalyzes the ferrous insertion into protoporphyrin IX. In Salmonella dublin (strain CT_02021853), this protein is Ferrochelatase.